A 415-amino-acid polypeptide reads, in one-letter code: Homoserine O-succinyltransferase (415 aa).

In terms of domain architecture, AB hydrolase-1 spans 69–383 (NAVLVCHALN…PHGHDAFLLD (315 aa)). Ser-175 functions as the Nucleophile in the catalytic mechanism. Arg-245 lines the substrate pocket. Catalysis depends on residues Asp-344 and His-377. A substrate-binding site is contributed by Asp-378.

Belongs to the AB hydrolase superfamily. MetX family. In terms of assembly, homodimer.

The protein resides in the cytoplasm. It catalyses the reaction L-homoserine + succinyl-CoA = O-succinyl-L-homoserine + CoA. The protein operates within amino-acid biosynthesis; L-methionine biosynthesis via de novo pathway; O-succinyl-L-homoserine from L-homoserine: step 1/1. Transfers a succinyl group from succinyl-CoA to L-homoserine, forming succinyl-L-homoserine. The chain is Homoserine O-succinyltransferase from Bordetella parapertussis (strain 12822 / ATCC BAA-587 / NCTC 13253).